Reading from the N-terminus, the 108-residue chain is Large ribosomal subunit protein eL32 (108 aa).

Residues 21 to 30 are compositionally biased toward basic residues; sequence RRPRGRTSKM. Residues 21–44 form a disordered region; that stretch reads RRPRGRTSKMRRYEKGKPAMPAIG.

It belongs to the eukaryotic ribosomal protein eL32 family.

This chain is Large ribosomal subunit protein eL32 (rpl32e), found in Methanothermobacter thermautotrophicus (strain ATCC 29096 / DSM 1053 / JCM 10044 / NBRC 100330 / Delta H) (Methanobacterium thermoautotrophicum).